The chain runs to 477 residues: Glutamyl-tRNA(Gln) amidotransferase subunit A (477 aa).

Catalysis depends on charge relay system residues Lys71 and Ser146. Residue Ser170 is the Acyl-ester intermediate of the active site.

This sequence belongs to the amidase family. GatA subfamily. As to quaternary structure, heterotrimer of A, B and C subunits.

It catalyses the reaction L-glutamyl-tRNA(Gln) + L-glutamine + ATP + H2O = L-glutaminyl-tRNA(Gln) + L-glutamate + ADP + phosphate + H(+). In terms of biological role, allows the formation of correctly charged Gln-tRNA(Gln) through the transamidation of misacylated Glu-tRNA(Gln) in organisms which lack glutaminyl-tRNA synthetase. The reaction takes place in the presence of glutamine and ATP through an activated gamma-phospho-Glu-tRNA(Gln). This Halothermothrix orenii (strain H 168 / OCM 544 / DSM 9562) protein is Glutamyl-tRNA(Gln) amidotransferase subunit A.